Reading from the N-terminus, the 410-residue chain is Cysteine desulfurase IscS (410 aa).

Residues 80–81, asparagine 160, glutamine 188, and 208–210 each bind pyridoxal 5'-phosphate; these read AT and SGH. Lysine 211 carries the N6-(pyridoxal phosphate)lysine modification. Pyridoxal 5'-phosphate is bound at residue threonine 248. The active-site Cysteine persulfide intermediate is cysteine 334. Cysteine 334 contributes to the [2Fe-2S] cluster binding site.

This sequence belongs to the class-V pyridoxal-phosphate-dependent aminotransferase family. NifS/IscS subfamily. As to quaternary structure, homodimer. Forms a heterotetramer with IscU, interacts with other sulfur acceptors. The cofactor is pyridoxal 5'-phosphate.

The protein localises to the cytoplasm. It catalyses the reaction (sulfur carrier)-H + L-cysteine = (sulfur carrier)-SH + L-alanine. It participates in cofactor biosynthesis; iron-sulfur cluster biosynthesis. Master enzyme that delivers sulfur to a number of partners involved in Fe-S cluster assembly, tRNA modification or cofactor biosynthesis. Catalyzes the removal of elemental sulfur atoms from cysteine to produce alanine. Functions as a sulfur delivery protein for Fe-S cluster synthesis onto IscU, an Fe-S scaffold assembly protein, as well as other S acceptor proteins. This chain is Cysteine desulfurase IscS, found in Rickettsia felis (strain ATCC VR-1525 / URRWXCal2) (Rickettsia azadi).